A 40-amino-acid chain; its full sequence is Photosystem II reaction center protein J (40 aa).

A helical membrane pass occupies residues 8–28; sequence IPLWLVALVAGTGVLVVVGLF.

Belongs to the PsbJ family. PSII is composed of 1 copy each of membrane proteins PsbA, PsbB, PsbC, PsbD, PsbE, PsbF, PsbH, PsbI, PsbJ, PsbK, PsbL, PsbM, PsbT, PsbX, PsbY, PsbZ, Psb30/Ycf12, peripheral proteins PsbO, CyanoQ (PsbQ), PsbU, PsbV and a large number of cofactors. It forms dimeric complexes.

It is found in the cellular thylakoid membrane. In terms of biological role, one of the components of the core complex of photosystem II (PSII). PSII is a light-driven water:plastoquinone oxidoreductase that uses light energy to abstract electrons from H(2)O, generating O(2) and a proton gradient subsequently used for ATP formation. It consists of a core antenna complex that captures photons, and an electron transfer chain that converts photonic excitation into a charge separation. The protein is Photosystem II reaction center protein J of Trichodesmium erythraeum (strain IMS101).